The chain runs to 208 residues: dITP/XTP pyrophosphatase (208 aa).

Residue 11 to 16 (TGNAKK) participates in substrate binding. Asp-73 functions as the Proton acceptor in the catalytic mechanism. Asp-73 is a Mg(2+) binding site. Substrate-binding positions include Ser-74, 157–160 (FGYD), Lys-180, and 185–186 (HR).

It belongs to the HAM1 NTPase family. In terms of assembly, homodimer. Mg(2+) is required as a cofactor.

It catalyses the reaction XTP + H2O = XMP + diphosphate + H(+). The catalysed reaction is dITP + H2O = dIMP + diphosphate + H(+). It carries out the reaction ITP + H2O = IMP + diphosphate + H(+). Functionally, pyrophosphatase that catalyzes the hydrolysis of nucleoside triphosphates to their monophosphate derivatives, with a high preference for the non-canonical purine nucleotides XTP (xanthosine triphosphate), dITP (deoxyinosine triphosphate) and ITP. Seems to function as a house-cleaning enzyme that removes non-canonical purine nucleotides from the nucleotide pool, thus preventing their incorporation into DNA/RNA and avoiding chromosomal lesions. In Rhodopirellula baltica (strain DSM 10527 / NCIMB 13988 / SH1), this protein is dITP/XTP pyrophosphatase.